Consider the following 180-residue polypeptide: Large ribosomal subunit protein uL5c (180 aa).

It belongs to the universal ribosomal protein uL5 family. In terms of assembly, part of the 50S ribosomal subunit; contacts the 5S rRNA.

It localises to the plastid. It is found in the chloroplast. Binds 5S rRNA, forms part of the central protuberance of the 50S subunit. The sequence is that of Large ribosomal subunit protein uL5c (rpl5) from Stigeoclonium helveticum (Green alga).